A 345-amino-acid polypeptide reads, in one-letter code: tRNA N6-adenosine threonylcarbamoyltransferase (345 aa).

Residues His115 and His119 each coordinate Fe cation. Substrate-binding positions include 137–141 (LVSGG), Asp170, Gly183, Asp187, and Asn276. Asp306 contributes to the Fe cation binding site.

Belongs to the KAE1 / TsaD family. Fe(2+) serves as cofactor.

The protein localises to the cytoplasm. It carries out the reaction L-threonylcarbamoyladenylate + adenosine(37) in tRNA = N(6)-L-threonylcarbamoyladenosine(37) in tRNA + AMP + H(+). Functionally, required for the formation of a threonylcarbamoyl group on adenosine at position 37 (t(6)A37) in tRNAs that read codons beginning with adenine. Is involved in the transfer of the threonylcarbamoyl moiety of threonylcarbamoyl-AMP (TC-AMP) to the N6 group of A37, together with TsaE and TsaB. TsaD likely plays a direct catalytic role in this reaction. This is tRNA N6-adenosine threonylcarbamoyltransferase from Pediococcus pentosaceus (strain ATCC 25745 / CCUG 21536 / LMG 10740 / 183-1w).